The primary structure comprises 395 residues: Vibriobactin-specific isochorismate synthase (395 aa).

This sequence belongs to the isochorismate synthase family.

The catalysed reaction is chorismate = isochorismate. The protein operates within siderophore biosynthesis; vibriobactin biosynthesis. This chain is Vibriobactin-specific isochorismate synthase (vibC), found in Vibrio cholerae serotype O1 (strain ATCC 39315 / El Tor Inaba N16961).